The primary structure comprises 457 residues: NADH-quinone oxidoreductase subunit D (457 aa).

Positions 1–23 are disordered; sequence MSTHTETPVDGSAETITGAQPYE.

The protein belongs to the complex I 49 kDa subunit family. As to quaternary structure, NDH-1 is composed of 14 different subunits. Subunits NuoB, C, D, E, F, and G constitute the peripheral sector of the complex.

It is found in the cell membrane. The enzyme catalyses a quinone + NADH + 5 H(+)(in) = a quinol + NAD(+) + 4 H(+)(out). Functionally, NDH-1 shuttles electrons from NADH, via FMN and iron-sulfur (Fe-S) centers, to quinones in the respiratory chain. The immediate electron acceptor for the enzyme in this species is believed to be a menaquinone. Couples the redox reaction to proton translocation (for every two electrons transferred, four hydrogen ions are translocated across the cytoplasmic membrane), and thus conserves the redox energy in a proton gradient. The chain is NADH-quinone oxidoreductase subunit D from Parafrankia sp. (strain EAN1pec).